We begin with the raw amino-acid sequence, 373 residues long: Lipoyl amidotransferase LIPT1, mitochondrial (373 aa).

Residues 1–25 constitute a mitochondrion transit peptide; the sequence is MLIPFSMKNCFQLLCNLKVPAAGFK. A BPL/LPL catalytic domain is found at 57-243; sequence LEGKPVLFLW…EYATSHQIDN (187 aa). Residues tyrosine 107, arginine 151, lysine 161, threonine 179, threonine 208, and alanine 210 each coordinate (R)-lipoyl-5'-AMP.

This sequence belongs to the LplA family.

The protein localises to the mitochondrion. It carries out the reaction N(6)-[(R)-lipoyl]-L-lysyl-[glycine-cleavage complex H protein] + L-lysyl-[lipoyl-carrier protein] = L-lysyl-[glycine-cleavage complex H protein] + N(6)-[(R)-lipoyl]-L-lysyl-[lipoyl-carrier protein]. The catalysed reaction is (R)-lipoyl-5'-AMP + L-lysyl-[lipoyl-carrier protein] = N(6)-[(R)-lipoyl]-L-lysyl-[lipoyl-carrier protein] + AMP + 2 H(+). It functions in the pathway protein modification; protein lipoylation via exogenous pathway; protein N(6)-(lipoyl)lysine from lipoate: step 2/2. With respect to regulation, inhibited by lipoyl-AMP analogs including hexanoyl-, octanoyl- and decanoyl-AMP. Its function is as follows. Lipoyl amidotransferase that catalyzes the transfer of lipoyl moieties from lipoyl-protein H of the glycine cleavage system (lipoyl-GCSH) to E2 subunits of the pyruvate dehydrogenase complex (PDCE2). Unable to catalyze the transfer of octanoyl from octanoyl-GCSH to PDCE2. In vitro, it is also able to catalyze the transfer of the lipoyl group from lipoyl-AMP to the specific lysine residue of lipoyl domains of lipoate-dependent enzymes but this reaction may not be physiologically relevant. The polypeptide is Lipoyl amidotransferase LIPT1, mitochondrial (LIPT1) (Bos taurus (Bovine)).